Here is a 332-residue protein sequence, read N- to C-terminus: NADH-quinone oxidoreductase subunit H (332 aa).

Transmembrane regions (helical) follow at residues 4-24 (FAFF…IFAS), 44-64 (IGPD…MIKL), 78-98 (FIFA…LAAI), 120-140 (VALL…FLGG), 165-185 (VGAL…LVDI), 194-214 (FSWL…ALFI), 255-275 (IAGA…FWII), 279-299 (IMMI…RAAF), and 312-332 (YLIL…AVLL).

This sequence belongs to the complex I subunit 1 family. In terms of assembly, NDH-1 is composed of 14 different subunits. Subunits NuoA, H, J, K, L, M, N constitute the membrane sector of the complex.

The protein resides in the cell inner membrane. It carries out the reaction a quinone + NADH + 5 H(+)(in) = a quinol + NAD(+) + 4 H(+)(out). NDH-1 shuttles electrons from NADH, via FMN and iron-sulfur (Fe-S) centers, to quinones in the respiratory chain. The immediate electron acceptor for the enzyme in this species is believed to be ubiquinone. Couples the redox reaction to proton translocation (for every two electrons transferred, four hydrogen ions are translocated across the cytoplasmic membrane), and thus conserves the redox energy in a proton gradient. This subunit may bind ubiquinone. This Campylobacter jejuni subsp. jejuni serotype O:6 (strain 81116 / NCTC 11828) protein is NADH-quinone oxidoreductase subunit H.